Here is a 501-residue protein sequence, read N- to C-terminus: Nuclear receptor-binding protein 2 (501 aa).

The interval 1 to 33 (MAAPEPAPRRAREREREREDESEDESDILEESP) is disordered. Residues 7–19 (APRRARERERERE) show a composition bias toward basic and acidic residues. Over residues 20 to 30 (DESEDESDILE) the composition is skewed to acidic residues. The Protein kinase domain occupies 38-306 (QKRREQVNQG…AHSLLFHRVL (269 aa)). Phosphothreonine occurs at positions 409 and 411.

It belongs to the protein kinase superfamily. Ser/Thr protein kinase family.

It is found in the cytoplasm. May regulate apoptosis of neural progenitor cells during their differentiation. The protein is Nuclear receptor-binding protein 2 of Homo sapiens (Human).